Reading from the N-terminus, the 443-residue chain is Probable D-serine dehydratase (443 aa).

Lys116 carries the post-translational modification N6-(pyridoxal phosphate)lysine.

It belongs to the serine/threonine dehydratase family. DsdA subfamily. It depends on pyridoxal 5'-phosphate as a cofactor.

The enzyme catalyses D-serine = pyruvate + NH4(+). The chain is Probable D-serine dehydratase from Bacillus cereus (strain G9842).